The sequence spans 357 residues: Glucose 1-dehydrogenase (357 aa).

Residue Asp-38 participates in Zn(2+) binding. 2 residues coordinate substrate: Thr-40 and His-49. His-63 and Glu-64 together coordinate Zn(2+). Substrate contacts are provided by Glu-114 and Glu-150. Zn(2+) is bound at residue Glu-150. NADP(+) contacts are provided by residues 181 to 184 (NGSL), 207 to 208 (RR), Ser-228, 272 to 274 (LGV), and 301 to 303 (SVN). Substrate is bound at residue Asn-303.

The protein belongs to the zinc-containing alcohol dehydrogenase family. Glucose 1-dehydrogenase subfamily. In terms of assembly, homodimer. Zn(2+) serves as cofactor.

It carries out the reaction D-glucose + NAD(+) = D-glucono-1,5-lactone + NADH + H(+). The catalysed reaction is D-glucose + NADP(+) = D-glucono-1,5-lactone + NADPH + H(+). With respect to regulation, activated by molar concentrations of KCl or NaCl. Inhibited by EDTA in vitro. In terms of biological role, catalyzes the NAD(P)(+)-dependent oxidation of D-glucose to D-gluconate. Displays broad substrate specificity since it is able to catalyze the oxidation of a number of alternative aldose sugars, such as D-xylose, D-galactose, and D-fucose, to the corresponding glyconate. Can utilize both NAD(+) and NADP(+) as electron acceptor, with a preference for NADP(+). Physiologically, seems to be involved in the degradation of glucose through a modified Entner-Doudoroff pathway. The sequence is that of Glucose 1-dehydrogenase from Haloferax mediterranei (strain ATCC 33500 / DSM 1411 / JCM 8866 / NBRC 14739 / NCIMB 2177 / R-4) (Halobacterium mediterranei).